The chain runs to 113 residues: Probable 4-amino-4-deoxy-L-arabinose-phosphoundecaprenol flippase subunit ArnE (113 aa).

The next 3 membrane-spanning stretches (helical) occupy residues 40-60 (FGWLMLAALLLGIGLLLWLLV), 64-84 (LPLGVAYPLLSINFVLVTLLA), and 92-112 (VDRHHWWGIALIVIGIYLMQG).

Belongs to the ArnE family. In terms of assembly, heterodimer of ArnE and ArnF.

The protein resides in the cell inner membrane. It participates in bacterial outer membrane biogenesis; lipopolysaccharide biosynthesis. Functionally, translocates 4-amino-4-deoxy-L-arabinose-phosphoundecaprenol (alpha-L-Ara4N-phosphoundecaprenol) from the cytoplasmic to the periplasmic side of the inner membrane. This Pectobacterium atrosepticum (strain SCRI 1043 / ATCC BAA-672) (Erwinia carotovora subsp. atroseptica) protein is Probable 4-amino-4-deoxy-L-arabinose-phosphoundecaprenol flippase subunit ArnE.